Reading from the N-terminus, the 685-residue chain is Mannan-binding lectin serine protease 2 (685 aa).

Positions 1-19 are cleaved as a signal peptide; it reads MRLLIFLGLLWSLVATLLG. A CUB 1 domain is found at 20 to 137; sequence SKWPEPVFGR…TGFEAFYAAE (118 aa). The Ca(2+) site is built by Glu-67 and Asp-75. A disulfide bond links Cys-72 and Cys-90. An N-linked (GlcNAc...) asparagine glycan is attached at Asn-103. Residues Asp-120, Ser-122, Asn-123, Asp-138, and Glu-141 each coordinate Ca(2+). The 44-residue stretch at 138-181 folds into the EGF-like; calcium-binding domain; that stretch reads DVDECRVSLGDSVPCDHYCHNYLGGYYCSCRAGYVLHQNKHTCS. Intrachain disulfides connect Cys-142–Cys-156, Cys-152–Cys-165, Cys-167–Cys-180, Cys-184–Cys-211, and Cys-241–Cys-259. Asn-158 and Gly-162 together coordinate Ca(2+). (3R)-3-hydroxyasparagine is present on Asn-158. The CUB 2 domain occupies 184–296; it reads CSGQVFTGRS…TGWKIHYTST (113 aa). 2 N-linked (GlcNAc...) asparagine glycosylation sites follow: Asn-285 and Asn-308. Sushi domains are found at residues 298 to 363 and 364 to 431; these read RPCP…ECSI and IDCG…VCEP. Disulfide bonds link Cys-300-Cys-348, Cys-328-Cys-361, Cys-366-Cys-411, Cys-396-Cys-429, Cys-433-Cys-552, Cys-598-Cys-617, and Cys-628-Cys-659. A Peptidase S1 domain is found at 444-683; that stretch reads IVGGQPAKPG…YIPWIENIIS (240 aa). Catalysis depends on charge relay system residues His-483 and Asp-532. An N-linked (GlcNAc...) asparagine glycan is attached at Asn-545. Ser-632 (charge relay system) is an active-site residue. Asn-641 carries N-linked (GlcNAc...) asparagine glycosylation.

The protein belongs to the peptidase S1 family. Homodimer; disulfide-linked. Binds MBL2. Isoform 2 binds to MASP1. Binds SERPING1. In terms of processing, the iron and 2-oxoglutarate dependent 3-hydroxylation of aspartate and asparagine is (R) stereospecific within EGF domains. In terms of tissue distribution, plasma.

Its subcellular location is the secreted. The catalysed reaction is Selective cleavage after Arg-223 in complement component C2 (-Ser-Leu-Gly-Arg-|-Lys-Ile-Gln-Ile) and after Arg-76 in complement component C4 (-Gly-Leu-Gln-Arg-|-Ala-Leu-Glu-Ile).. In terms of biological role, serum protease that plays an important role in the activation of the complement system via mannose-binding lectin. After activation by auto-catalytic cleavage it cleaves C2 and C4, leading to their activation and to the formation of C3 convertase. This Mus musculus (Mouse) protein is Mannan-binding lectin serine protease 2 (Masp2).